Consider the following 294-residue polypeptide: 33 kDa chaperonin (294 aa).

Disulfide bonds link cysteine 237–cysteine 239 and cysteine 270–cysteine 273.

Belongs to the HSP33 family. Post-translationally, under oxidizing conditions two disulfide bonds are formed involving the reactive cysteines. Under reducing conditions zinc is bound to the reactive cysteines and the protein is inactive.

It is found in the cytoplasm. In terms of biological role, redox regulated molecular chaperone. Protects both thermally unfolding and oxidatively damaged proteins from irreversible aggregation. Plays an important role in the bacterial defense system toward oxidative stress. This Geobacillus kaustophilus (strain HTA426) protein is 33 kDa chaperonin.